A 109-amino-acid chain; its full sequence is Protein reprimo (109 aa).

N-linked (GlcNAc...) asparagine glycans are attached at residues N7 and N18. Residues 56–76 traverse the membrane as a helical segment; sequence VVQIAVMCVLSLTVVFGIFFL. A Phosphoserine modification is found at S98.

It belongs to the reprimo family.

The protein resides in the cytoplasm. The protein localises to the membrane. May be involved in the regulation of p53-dependent G2 arrest of the cell cycle. Seems to induce cell cycle arrest by inhibiting CDK1 activity and nuclear translocation of the CDC2 cyclin B1 complex. The sequence is that of Protein reprimo (Rprm) from Mus musculus (Mouse).